We begin with the raw amino-acid sequence, 353 residues long: Terpene synthase 3 (353 aa).

Residues D118, N261, and E269 each contribute to the Mg(2+) site. A D(D/E)XX(D/E) motif motif is present at residues 118–122 (DDLLE). An NSE motif motif is present at residues 261–269 (NDTFLLKKE). Positions 342 to 349 (WCSKTTRY) match the WxxxxxRY motif motif.

Belongs to the terpene synthase family. Mg(2+) serves as cofactor.

Its function is as follows. Terpene synthase that may be involved in the production of volatile terpenoids. Does not show detectable terpene products with either farnesyl diphosphate (FPP) or geranyl diphosphate (GPP). P.polycephalum has a unique biology and these volatile terpenoids could function in internal communication of P.polycephalum, to mark the territory that have been explored, or they may be involved in chemotaxis. This chain is Terpene synthase 3, found in Physarum polycephalum (Slime mold).